A 133-amino-acid chain; its full sequence is MLSQIKREGNRVVMLVNRRYTARGKNLPSSPKKVRPIADNIRGKSYIKAIAVLCSMPNKGAKLLEKVVKSAASNAMYHNKNLSEDMIFVKIVMVDDGRRRKKIWPRARGRADRLVNRNCHIFVEVDEKKDIKG.

It belongs to the universal ribosomal protein uL22 family. As to quaternary structure, part of the 50S ribosomal subunit.

In terms of biological role, this protein binds specifically to 23S rRNA; its binding is stimulated by other ribosomal proteins, e.g. L4, L17, and L20. It is important during the early stages of 50S assembly. It makes multiple contacts with different domains of the 23S rRNA in the assembled 50S subunit and ribosome. The globular domain of the protein is located near the polypeptide exit tunnel on the outside of the subunit, while an extended beta-hairpin is found that lines the wall of the exit tunnel in the center of the 70S ribosome. This Borrelia garinii subsp. bavariensis (strain ATCC BAA-2496 / DSM 23469 / PBi) (Borreliella bavariensis) protein is Large ribosomal subunit protein uL22.